A 230-amino-acid chain; its full sequence is tRNA (guanine-N(7)-)-methyltransferase (230 aa).

S-adenosyl-L-methionine is bound by residues E61, E86, N113, and D136. Residue D136 is part of the active site. Substrate contacts are provided by residues K140, D172, and 208–211 (TKYE).

This sequence belongs to the class I-like SAM-binding methyltransferase superfamily. TrmB family.

The catalysed reaction is guanosine(46) in tRNA + S-adenosyl-L-methionine = N(7)-methylguanosine(46) in tRNA + S-adenosyl-L-homocysteine. It participates in tRNA modification; N(7)-methylguanine-tRNA biosynthesis. Catalyzes the formation of N(7)-methylguanine at position 46 (m7G46) in tRNA. This Mycobacterium leprae (strain Br4923) protein is tRNA (guanine-N(7)-)-methyltransferase.